The chain runs to 312 residues: Ribosomal protein L11 methyltransferase (312 aa).

Residues threonine 163, glycine 184, aspartate 206, and asparagine 248 each contribute to the S-adenosyl-L-methionine site.

It belongs to the methyltransferase superfamily. PrmA family.

The protein localises to the cytoplasm. It catalyses the reaction L-lysyl-[protein] + 3 S-adenosyl-L-methionine = N(6),N(6),N(6)-trimethyl-L-lysyl-[protein] + 3 S-adenosyl-L-homocysteine + 3 H(+). Methylates ribosomal protein L11. The sequence is that of Ribosomal protein L11 methyltransferase from Clostridium botulinum (strain Okra / Type B1).